A 169-amino-acid polypeptide reads, in one-letter code: Crossover junction endodeoxyribonuclease RuvC (169 aa).

Active-site residues include Asp12, Glu72, and Asp144. Mg(2+) is bound by residues Asp12, Glu72, and Asp144.

It belongs to the RuvC family. Homodimer which binds Holliday junction (HJ) DNA. The HJ becomes 2-fold symmetrical on binding to RuvC with unstacked arms; it has a different conformation from HJ DNA in complex with RuvA. In the full resolvosome a probable DNA-RuvA(4)-RuvB(12)-RuvC(2) complex forms which resolves the HJ. It depends on Mg(2+) as a cofactor.

The protein resides in the cytoplasm. It catalyses the reaction Endonucleolytic cleavage at a junction such as a reciprocal single-stranded crossover between two homologous DNA duplexes (Holliday junction).. Functionally, the RuvA-RuvB-RuvC complex processes Holliday junction (HJ) DNA during genetic recombination and DNA repair. Endonuclease that resolves HJ intermediates. Cleaves cruciform DNA by making single-stranded nicks across the HJ at symmetrical positions within the homologous arms, yielding a 5'-phosphate and a 3'-hydroxyl group; requires a central core of homology in the junction. The consensus cleavage sequence is 5'-(A/T)TT(C/G)-3'. Cleavage occurs on the 3'-side of the TT dinucleotide at the point of strand exchange. HJ branch migration catalyzed by RuvA-RuvB allows RuvC to scan DNA until it finds its consensus sequence, where it cleaves and resolves the cruciform DNA. The sequence is that of Crossover junction endodeoxyribonuclease RuvC from Xanthobacter autotrophicus (strain ATCC BAA-1158 / Py2).